Here is a 115-residue protein sequence, read N- to C-terminus: NADH-ubiquinone oxidoreductase chain 3 (115 aa).

3 consecutive transmembrane segments (helical) span residues 3–23 (FALI…ITFW), 55–75 (FFLV…LLPL), and 84–104 (LPLM…SLAY).

This sequence belongs to the complex I subunit 3 family. Core subunit of respiratory chain NADH dehydrogenase (Complex I) which is composed of 45 different subunits. Interacts with TMEM186. Interacts with TMEM242.

The protein resides in the mitochondrion inner membrane. The enzyme catalyses a ubiquinone + NADH + 5 H(+)(in) = a ubiquinol + NAD(+) + 4 H(+)(out). In terms of biological role, core subunit of the mitochondrial membrane respiratory chain NADH dehydrogenase (Complex I) which catalyzes electron transfer from NADH through the respiratory chain, using ubiquinone as an electron acceptor. Essential for the catalytic activity of complex I. In Gorilla gorilla gorilla (Western lowland gorilla), this protein is NADH-ubiquinone oxidoreductase chain 3.